Reading from the N-terminus, the 345-residue chain is Tubulin-specific chaperone C (345 aa).

Methionine 1 is modified (N-acetylmethionine). The interval 1 to 56 (METGGLSAAALANGDLGSQRERTLVPERLQKREHERQLEVERRKQKRQDQEVEEEK) is disordered. Residues 18 to 50 (SQRERTLVPERLQKREHERQLEVERRKQKRQDQ) show a composition bias toward basic and acidic residues. Serine 80 and serine 167 each carry phosphoserine. Residues 139–170 (FKTRKKDAASATQVASAPDAPAAEGSLTSPPP) are disordered. Positions 170–322 (PLKEEGDFDS…NWNDVDDFNW (153 aa)) constitute a C-CAP/cofactor C-like domain.

The protein belongs to the TBCC family. In terms of assembly, supercomplex made of cofactors A to E. Cofactors A and D function by capturing and stabilizing tubulin in a quasi-native conformation. Cofactor E binds to the cofactor D-tubulin complex; interaction with cofactor C then causes the release of tubulin polypeptides that are committed to the native state.

It localises to the cytoplasm. In terms of biological role, tubulin-folding protein; involved in the final step of the tubulin folding pathway. This is Tubulin-specific chaperone C (TBCC) from Bos taurus (Bovine).